Reading from the N-terminus, the 302-residue chain is MSDSEEVVEEYEQEQEEEYVEEEEEEWLEEDDGQEDQVDEEEEETEETTAEEQEDETKAPGEGGEGDREQEPGEGESKPKPKPFMPNLVPPKIPDGERLDFDDIHRKRMEKDLNELQALIEAHFESRKKEEEELISLKDRIEQRRAERAEQQRIRSEREKERQARMAEERARKEEEEARKKAEKEARKKKAFSNMLHFGGYMQKSEKKGGKKQTEREKKKKILSERRKPLNIDHLSEDKLRDKAKELWQTIRDLEAEKFDLQEKFKRQKYEINVLRNRVSDHQKVKGSKAARGKTMVGGRWK.

Positions 1-55 are enriched in acidic residues; sequence MSDSEEVVEEYEQEQEEEYVEEEEEEWLEEDDGQEDQVDEEEEETEETTAEEQED. Disordered stretches follow at residues 1–99, 138–230, and 280–302; these read MSDS…GERL, KDRI…RKPL, and SDHQKVKGSKAARGKTMVGGRWK. Ser2 bears the N-acetylserine mark. Phosphoserine; by CK2 is present on Ser2. Residues 65-79 show a composition bias toward basic and acidic residues; that stretch reads EGDREQEPGEGESKP. Residues 82-93 show a composition bias toward pro residues; the sequence is KPFMPNLVPPKI. Basic and acidic residues-rich tracts occupy residues 138 to 186 and 204 to 230; these read KDRI…EKEA and KSEKKGGKKQTEREKKKKILSERRKPL.

The protein belongs to the troponin T family.

Functionally, troponin T is the tropomyosin-binding subunit of troponin, the thin filament regulatory complex which confers calcium-sensitivity to striated muscle actomyosin ATPase activity. The polypeptide is Troponin T, cardiac muscle isoforms (TNNT2) (Gallus gallus (Chicken)).